Reading from the N-terminus, the 399-residue chain is Probable peptidoglycan glycosyltransferase FtsW (399 aa).

At 1–32 the chain is on the cytoplasmic side; the sequence is MMAGFAQTTITKINQFYERWMPRLPAEMTARN. A helical membrane pass occupies residues 33-53; sequence VLVFCVVCLLCIGSVMVASAS. The Periplasmic segment spans residues 54-72; that stretch reads MPYAEYMHENPFHYVVRHA. The chain crosses the membrane as a helical span at residues 73–93; that stretch reads ISIATAAIVAYLVYKVPLNVW. The Cytoplasmic segment spans residues 94–97; sequence FKNT. A helical transmembrane segment spans residues 98 to 118; sequence FSFWLITILLLLAVLVIGTEV. The Periplasmic portion of the chain corresponds to 119-126; the sequence is NGSRRWIR. Residues 127–147 form a helical membrane-spanning segment; the sequence is LAGFTLQPTEVAKVMMAIFTA. Topologically, residues 148 to 159 are cytoplasmic; the sequence is DYVVRRAKEVRT. A helical transmembrane segment spans residues 160–180; it reads HWKGLVRLSGVMAITVGLIIA. Residues 181–183 are Periplasmic-facing; the sequence is EPD. The chain crosses the membrane as a helical span at residues 184–204; it reads LGATVVIVLMMVGIFFLAGAP. The Cytoplasmic segment spans residues 205 to 207; it reads PTQ. The helical transmembrane segment at 208 to 228 threads the bilayer; it reads FAIMLGAVVMGIGFLILFEPY. Residues 229–292 are Periplasmic-facing; the sequence is RLARAMSFTN…DFMLAVLGEE (64 aa). The chain crosses the membrane as a helical span at residues 293 to 313; it reads FGFVGISIVIGLSFIMLACCI. Over 314–327 the chain is Cytoplasmic; it reads KIGHRALKHNFLRA. A helical membrane pass occupies residues 328 to 348; that stretch reads GYLAYGISIIFLLQIIVNAGM. The Periplasmic portion of the chain corresponds to 349–359; that stretch reads NMGLMPTKGLT. The helical transmembrane segment at 360–380 threads the bilayer; the sequence is LPFISYGGTSLMMCAAMISLI. The Cytoplasmic segment spans residues 381–399; the sequence is LRIDASTQEINPDREESNF.

The protein belongs to the SEDS family. FtsW subfamily.

The protein resides in the cell inner membrane. It carries out the reaction [GlcNAc-(1-&gt;4)-Mur2Ac(oyl-L-Ala-gamma-D-Glu-L-Lys-D-Ala-D-Ala)](n)-di-trans,octa-cis-undecaprenyl diphosphate + beta-D-GlcNAc-(1-&gt;4)-Mur2Ac(oyl-L-Ala-gamma-D-Glu-L-Lys-D-Ala-D-Ala)-di-trans,octa-cis-undecaprenyl diphosphate = [GlcNAc-(1-&gt;4)-Mur2Ac(oyl-L-Ala-gamma-D-Glu-L-Lys-D-Ala-D-Ala)](n+1)-di-trans,octa-cis-undecaprenyl diphosphate + di-trans,octa-cis-undecaprenyl diphosphate + H(+). Its pathway is cell wall biogenesis; peptidoglycan biosynthesis. Peptidoglycan polymerase that is essential for cell division. The chain is Probable peptidoglycan glycosyltransferase FtsW from Acinetobacter baylyi (strain ATCC 33305 / BD413 / ADP1).